A 240-amino-acid chain; its full sequence is MQRRRCRYAIGIDEAGRGPVIGPMVVVGVAVCSNDIDKLVALGVRDSKQLTPVVRAKLYGEILRVALHSVIVKLPPALLDAVNLNQLEVETFEYIASRIAGVHDSPEAVYVDAVGSPEKLAARLSGRLGVRVIAEPGADKTYPIVSAASIVAKVVRDAEIRMLRRLYGVRGSGYPTDPETIAWLAEEYRRNPANPPWFVRRTWSTLKRIAPGWYVEKQATTQPPRGQRSLLDYLLGEKQS.

Positions 7–215 constitute an RNase H type-2 domain; that stretch reads RYAIGIDEAG…LKRIAPGWYV (209 aa). Residues Asp-13, Glu-14, and Asp-112 each contribute to the a divalent metal cation site.

This sequence belongs to the RNase HII family. The cofactor is Mn(2+). Mg(2+) is required as a cofactor.

It localises to the cytoplasm. The enzyme catalyses Endonucleolytic cleavage to 5'-phosphomonoester.. Its function is as follows. Endonuclease that specifically degrades the RNA of RNA-DNA hybrids. The chain is Ribonuclease HII from Hyperthermus butylicus (strain DSM 5456 / JCM 9403 / PLM1-5).